Here is a 509-residue protein sequence, read N- to C-terminus: tRNA-2-methylthio-N(6)-dimethylallyladenosine synthase (509 aa).

The disordered stretch occupies residues 1-20; it reads MNEKQKQESGQVNPADKTSE. Residues 66–184 form the MTTase N-terminal domain; that stretch reads RKFYIRTYGC…LPELLSEAYL (119 aa). The [4Fe-4S] cluster site is built by C75, C111, C145, C221, C225, and C228. The Radical SAM core domain maps to 207 to 437; it reads RNGKIKGWVN…NDLVKEISAK (231 aa). Positions 440-503 constitute a TRAM domain; the sequence is KEYEGRTVEV…TWSLDGVMAG (64 aa).

The protein belongs to the methylthiotransferase family. MiaB subfamily. As to quaternary structure, monomer. It depends on [4Fe-4S] cluster as a cofactor.

The protein resides in the cytoplasm. It catalyses the reaction N(6)-dimethylallyladenosine(37) in tRNA + (sulfur carrier)-SH + AH2 + 2 S-adenosyl-L-methionine = 2-methylsulfanyl-N(6)-dimethylallyladenosine(37) in tRNA + (sulfur carrier)-H + 5'-deoxyadenosine + L-methionine + A + S-adenosyl-L-homocysteine + 2 H(+). Functionally, catalyzes the methylthiolation of N6-(dimethylallyl)adenosine (i(6)A), leading to the formation of 2-methylthio-N6-(dimethylallyl)adenosine (ms(2)i(6)A) at position 37 in tRNAs that read codons beginning with uridine. This Bacillus velezensis (strain DSM 23117 / BGSC 10A6 / LMG 26770 / FZB42) (Bacillus amyloliquefaciens subsp. plantarum) protein is tRNA-2-methylthio-N(6)-dimethylallyladenosine synthase.